A 99-amino-acid polypeptide reads, in one-letter code: DNA-directed RNA polymerase subunit omega (99 aa).

Belongs to the RNA polymerase subunit omega family. As to quaternary structure, the RNAP catalytic core consists of 2 alpha, 1 beta, 1 beta' and 1 omega subunit. When a sigma factor is associated with the core the holoenzyme is formed, which can initiate transcription.

The catalysed reaction is RNA(n) + a ribonucleoside 5'-triphosphate = RNA(n+1) + diphosphate. In terms of biological role, promotes RNA polymerase assembly. Latches the N- and C-terminal regions of the beta' subunit thereby facilitating its interaction with the beta and alpha subunits. This chain is DNA-directed RNA polymerase subunit omega, found in Xanthomonas axonopodis pv. citri (strain 306).